The primary structure comprises 392 residues: Telomere-binding protein subunit beta (392 aa).

The disordered stretch occupies residues 234–392; it reads QQVESVQVQP…ASKASKRSKK (159 aa). The segment covering 247–256 has biased composition (basic residues); sequence GGAKGKKKAA. The segment covering 257–268 has biased composition (low complexity); it reads TKSATKKTVAAK. Residues 269 to 284 show a composition bias toward basic and acidic residues; that stretch reads KTAESADVRKSVDKIV. Polar residues predominate over residues 328–343; it reads SPSGKKSTKTTDQMTM. The segment covering 374 to 384 has biased composition (low complexity); the sequence is GKASATSGKAS.

Heterodimer of an alpha and a beta subunit.

The protein localises to the nucleus. Its subcellular location is the chromosome. It localises to the telomere. May function as protective capping of the single-stranded telomeric overhang. May also participate in telomere length regulation during DNA replication. The protein is Telomere-binding protein subunit beta (STY43) of Stylonychia mytilus (Ciliate).